Consider the following 332-residue polypeptide: L-lactate dehydrogenase A chain (332 aa).

NAD(+) contacts are provided by residues 29–57 (GMVG…MEDK) and R99. Residues R106, N138, and R169 each contribute to the substrate site. NAD(+) is bound at residue N138. H193 functions as the Proton acceptor in the catalytic mechanism. Substrate is bound at residue T248.

This sequence belongs to the LDH/MDH superfamily. LDH family. Homotetramer.

The protein resides in the cytoplasm. The enzyme catalyses (S)-lactate + NAD(+) = pyruvate + NADH + H(+). The protein operates within fermentation; pyruvate fermentation to lactate; (S)-lactate from pyruvate: step 1/1. In terms of biological role, interconverts simultaneously and stereospecifically pyruvate and lactate with concomitant interconversion of NADH and NAD(+). The polypeptide is L-lactate dehydrogenase A chain (ldha) (Eleginops maclovinus (Patagonian blennie)).